The following is a 249-amino-acid chain: MNVLSCSINTLTLRGLYDISGVEVGQHFYWKIGGFQVHAQVLITSWVVIAILLGSAIVAVRNPQTIPTGGQNFFEYVLEFIRDVSKTQIGEEYGPWVPFIGTMFLFIFVSNWAGALLPWKIIQLPHGELAAPTNDINTTVALALLTSIAYFYAGLSKKGLGYFSKYIQPTPILLPINILEDFTKPLSLSFRLFGNILADELVVVVLVSLVPSVVPIPVMFLGLFTSGIQALIFATLAAAYIGESMEGHH.

Helical transmembrane passes span 40 to 60, 97 to 117, 136 to 156, 201 to 221, and 222 to 242; these read QVLITSWVVIAILLGSAIVAV, VPFIGTMFLFIFVSNWAGALL, INTTVALALLTSIAYFYAGLS, LVVVVLVSLVPSVVPIPVMFL, and GLFTSGIQALIFATLAAAYIG.

This sequence belongs to the ATPase A chain family. As to quaternary structure, F-type ATPases have 2 components, CF(1) - the catalytic core - and CF(0) - the membrane proton channel. CF(1) has five subunits: alpha(3), beta(3), gamma(1), delta(1), epsilon(1). CF(0) has four main subunits: a, b, b' and c.

The protein resides in the plastid. It localises to the chloroplast thylakoid membrane. Key component of the proton channel; it plays a direct role in the translocation of protons across the membrane. The sequence is that of ATP synthase subunit a, chloroplastic from Manihot esculenta (Cassava).